The primary structure comprises 115 residues: UPF0738 protein SAV1005 (115 aa).

The protein belongs to the UPF0738 family.

The chain is UPF0738 protein SAV1005 from Staphylococcus aureus (strain Mu50 / ATCC 700699).